The chain runs to 381 residues: 1-deoxy-D-xylulose 5-phosphate reductoisomerase (381 aa).

Residues Ser-10, Gly-11, Ser-12, Ile-13, Gly-36, Lys-37, Asn-38, and Asn-121 each contribute to the NADPH site. Lys-122 is a 1-deoxy-D-xylulose 5-phosphate binding site. Glu-123 serves as a coordination point for NADPH. Asp-147 provides a ligand contact to Mn(2+). 1-deoxy-D-xylulose 5-phosphate contacts are provided by Ser-148, Glu-149, Ser-173, and His-196. Glu-149 contributes to the Mn(2+) binding site. Position 202 (Gly-202) interacts with NADPH. 1-deoxy-D-xylulose 5-phosphate is bound by residues Ser-209, Asn-214, Lys-215, and Glu-218. Glu-218 lines the Mn(2+) pocket.

The protein belongs to the DXR family. Mg(2+) is required as a cofactor. It depends on Mn(2+) as a cofactor.

The catalysed reaction is 2-C-methyl-D-erythritol 4-phosphate + NADP(+) = 1-deoxy-D-xylulose 5-phosphate + NADPH + H(+). It functions in the pathway isoprenoid biosynthesis; isopentenyl diphosphate biosynthesis via DXP pathway; isopentenyl diphosphate from 1-deoxy-D-xylulose 5-phosphate: step 1/6. In terms of biological role, catalyzes the NADPH-dependent rearrangement and reduction of 1-deoxy-D-xylulose-5-phosphate (DXP) to 2-C-methyl-D-erythritol 4-phosphate (MEP). The polypeptide is 1-deoxy-D-xylulose 5-phosphate reductoisomerase (Geobacillus sp. (strain WCH70)).